Here is a 479-residue protein sequence, read N- to C-terminus: Galactosylgalactosylxylosylprotein 3-beta-glucuronosyltransferase P (479 aa).

At 1-34 (MKGGNYTSLGTCSGINVSGNVAGTRKMSLGKSIK) the chain is on the cytoplasmic side. The chain crosses the membrane as a helical; Signal-anchor for type II membrane protein span at residues 35–50 (MYLTIFILTTCIYMAL). At 51 to 479 (YQYHISREPF…EHIDRLLVRP (429 aa)) the chain is on the lumenal side. Asn-90, Asn-97, Asn-98, and Asn-271 each carry an N-linked (GlcNAc...) asparagine glycan. The span at 94-120 (NTNNNSTTTSTTTTTAPTTPTTTTTTT) shows a compositional bias: low complexity. A disordered region spans residues 94 to 122 (NTNNNSTTTSTTTTTAPTTPTTTTTTTVG). A Mn(2+)-binding site is contributed by Asp-335. Residue Glu-418 is the Proton acceptor of the active site. N-linked (GlcNAc...) asparagine glycosylation occurs at Asn-460.

Belongs to the glycosyltransferase 43 family. Mn(2+) is required as a cofactor.

Its subcellular location is the golgi apparatus membrane. It catalyses the reaction 3-O-(beta-D-galactosyl-(1-&gt;3)-beta-D-galactosyl-(1-&gt;4)-beta-D-xylosyl)-L-seryl-[protein] + UDP-alpha-D-glucuronate = 3-O-(beta-D-GlcA-(1-&gt;3)-beta-D-Gal-(1-&gt;3)-beta-D-Gal-(1-&gt;4)-beta-D-Xyl)-L-seryl-[protein] + UDP + H(+). The protein operates within protein modification; protein glycosylation. Functionally, involved in the biosynthesis of L2/HNK-1 carbohydrate epitope on both glycolipids and glycoproteins. Enzyme has a broad specificity. This chain is Galactosylgalactosylxylosylprotein 3-beta-glucuronosyltransferase P (GlcAT-P), found in Drosophila melanogaster (Fruit fly).